A 155-amino-acid chain; its full sequence is Probable calcium-binding protein CML44 (155 aa).

3 EF-hand domains span residues 6 to 41 (ITTN…LGWA), 85 to 120 (DNDE…LGFE), and 130 to 155 (RMIR…ILHV). Aspartate 19, asparagine 21, aspartate 23, glutamate 30, aspartate 98, asparagine 100, aspartate 102, tyrosine 104, and glutamate 109 together coordinate Ca(2+).

Functionally, potential calcium sensor. The chain is Probable calcium-binding protein CML44 (CML44) from Arabidopsis thaliana (Mouse-ear cress).